A 1827-amino-acid polypeptide reads, in one-letter code: Phenolphthiocerol/phthiocerol polyketide synthase subunit C (1827 aa).

Positions Cys-35–Gln-461 constitute a Ketosynthase family 3 (KS3) domain. Active-site for beta-ketoacyl synthase activity residues include Cys-207, His-342, and His-383. The tract at residues Val-566–Glu-876 is acyltransferase. The For malonyltransferase activity role is filled by Ser-654. The N-terminal hotdog fold stretch occupies residues His-910–Cys-1037. A dehydratase region spans residues His-910 to Leu-1076. Positions His-910–Pro-1198 constitute a PKS/mFAS DH domain. Residue His-942 is the Proton acceptor; for dehydratase activity of the active site. The segment at Gly-1050–Pro-1198 is C-terminal hotdog fold. Asp-1111 acts as the Proton donor; for dehydratase activity in catalysis. The segment at Ala-1439–Val-1617 is beta-ketoacyl reductase. An NADP(+)-binding site is contributed by Ser-1440–Leu-1485. Residues Arg-1706–Leu-1785 enclose the Carrier domain. An O-(pantetheine 4'-phosphoryl)serine modification is found at Ser-1745.

The cofactor is NADP(+). Pantetheine 4'-phosphate serves as cofactor.

It carries out the reaction icosanoyl-[(phenol)carboxyphthiodiolenone synthase] + 2 (S)-methylmalonyl-CoA + 3 malonyl-CoA + 5 NADPH + 10 H(+) = C32-carboxyphthiodiolenone-[(phenol)carboxyphthiodiolenone synthase] + 5 CO2 + 5 NADP(+) + 5 CoA + 2 H2O. It catalyses the reaction docosanoyl-[(phenol)carboxyphthiodiolenone synthase] + 2 (S)-methylmalonyl-CoA + 3 malonyl-CoA + 5 NADPH + 10 H(+) = C34-carboxyphthiodiolenone-[(phenol)carboxyphthiodiolenone synthase] + 5 CO2 + 5 NADP(+) + 5 CoA + 2 H2O. The enzyme catalyses 17-(4-hydroxyphenyl)heptadecanoyl-[(phenol)carboxyphthiodiolenone synthase] + 2 (S)-methylmalonyl-CoA + 3 malonyl-CoA + 5 NADPH + 10 H(+) = C35-(phenol)carboxyphthiodiolenone-[(phenol)carboxyphthiodiolenone synthase] + 5 CO2 + 5 NADP(+) + 5 CoA + 2 H2O. The catalysed reaction is 19-(4-hydroxyphenyl)nonadecanoyl-[(phenol)carboxyphthiodiolenone synthase] + 2 (S)-methylmalonyl-CoA + 3 malonyl-CoA + 5 NADPH + 10 H(+) = C37-(phenol)carboxyphthiodiolenone-[(phenol)carboxyphthiodiolenone synthase] + 5 CO2 + 5 NADP(+) + 5 CoA + 2 H2O. It functions in the pathway lipid metabolism; fatty acid biosynthesis. Part of the PpsABCDE complex involved in the biosynthesis of the lipid core common to phthiocerols and phenolphthiocerols by successive additions of malonyl-CoA or methylmalonyl-CoA extender units. PpsA can accept as substrate the activated forms of either icosanoyl (C20), docosanoyl (C22) or lignoceroyl (C24) groups from FadD26, or a (4-hydroxyphenyl)-C17 or (4-hydroxyphenyl)-C19 fatty acyl from FadD29. PpsA initiates the biosynthesis and extends its substrate using a malonyl-CoA extender unit. The PpsB and PpsC proteins add the second and third malonyl-CoA extender units. PpsD adds an (R)-methylmalonyl unit and PpsE adds a second (R)-methylmalonyl unit. The incorporation of the methylmalonyl units results in formation of two branched methyl groups in the elongated product. This is Phenolphthiocerol/phthiocerol polyketide synthase subunit C (ppsD) from Mycobacterium bovis (strain ATCC BAA-935 / AF2122/97).